A 160-amino-acid polypeptide reads, in one-letter code: Large ribosomal subunit protein uL22c (160 aa).

This sequence belongs to the universal ribosomal protein uL22 family. Part of the 50S ribosomal subunit.

The protein localises to the plastid. The protein resides in the chloroplast. Its function is as follows. This protein binds specifically to 23S rRNA. In terms of biological role, the globular domain of the protein is located near the polypeptide exit tunnel on the outside of the subunit, while an extended beta-hairpin is found that lines the wall of the exit tunnel in the center of the 70S ribosome. In Nasturtium officinale (Watercress), this protein is Large ribosomal subunit protein uL22c (rpl22).